The chain runs to 313 residues: Ribosomal protein L11 methyltransferase (313 aa).

Positions 164, 185, 207, and 249 each coordinate S-adenosyl-L-methionine.

Belongs to the methyltransferase superfamily. PrmA family.

The protein resides in the cytoplasm. The enzyme catalyses L-lysyl-[protein] + 3 S-adenosyl-L-methionine = N(6),N(6),N(6)-trimethyl-L-lysyl-[protein] + 3 S-adenosyl-L-homocysteine + 3 H(+). Functionally, methylates ribosomal protein L11. The chain is Ribosomal protein L11 methyltransferase from Clostridium perfringens (strain ATCC 13124 / DSM 756 / JCM 1290 / NCIMB 6125 / NCTC 8237 / Type A).